A 161-amino-acid chain; its full sequence is 2-C-methyl-D-erythritol 2,4-cyclodiphosphate synthase (161 aa).

Residues D9 and H11 each contribute to the a divalent metal cation site. Residues D9–H11 and H37–S38 each bind 4-CDP-2-C-methyl-D-erythritol 2-phosphate. H45 is a binding site for a divalent metal cation. 4-CDP-2-C-methyl-D-erythritol 2-phosphate-binding positions include D59–G61, F64–D68, T135–E138, and R145.

Belongs to the IspF family. As to quaternary structure, homotrimer. Requires a divalent metal cation as cofactor.

The catalysed reaction is 4-CDP-2-C-methyl-D-erythritol 2-phosphate = 2-C-methyl-D-erythritol 2,4-cyclic diphosphate + CMP. It functions in the pathway isoprenoid biosynthesis; isopentenyl diphosphate biosynthesis via DXP pathway; isopentenyl diphosphate from 1-deoxy-D-xylulose 5-phosphate: step 4/6. Its function is as follows. Involved in the biosynthesis of isopentenyl diphosphate (IPP) and dimethylallyl diphosphate (DMAPP), two major building blocks of isoprenoid compounds. Catalyzes the conversion of 4-diphosphocytidyl-2-C-methyl-D-erythritol 2-phosphate (CDP-ME2P) to 2-C-methyl-D-erythritol 2,4-cyclodiphosphate (ME-CPP) with a corresponding release of cytidine 5-monophosphate (CMP). In Leptospira interrogans serogroup Icterohaemorrhagiae serovar Lai (strain 56601), this protein is 2-C-methyl-D-erythritol 2,4-cyclodiphosphate synthase.